The sequence spans 274 residues: 16S rRNA (guanine(1405)-N(7))-methyltransferase (274 aa).

S-adenosyl-L-methionine-binding positions include 102 to 108 (HISTRER), alanine 133, aspartate 156, 182 to 183 (DL), leucine 198, and glutamine 207.

This sequence belongs to the methyltransferase superfamily. Aminoglycoside resistance family.

It catalyses the reaction guanosine(1405) in 16S rRNA + S-adenosyl-L-methionine = N(7)-methylguanosine(1405) in 16S rRNA + S-adenosyl-L-homocysteine. In terms of biological role, specifically methylates the N(7) position of guanine 1405 in 16S rRNA. Confers resistance to various aminoglycosides, including gentamicin, kanamycin and sisomicin. The sequence is that of 16S rRNA (guanine(1405)-N(7))-methyltransferase (sgm) from Micromonospora zionensis.